An 83-amino-acid chain; its full sequence is YNIPLGWGRRDMPGCLGVLGNRDLYDDVSRICSDCQNVFRDKNVESKCRSDCFSTSYFETCIMALDLAEKISDYKLHASILKE.

3 disulfide bridges follow: Cys15–Cys52, Cys32–Cys48, and Cys35–Cys61.

Found in the sinus glands of both male and female. Found also in the brain; the neuroendocrine structures of the protocerebrum.

It localises to the secreted. Functionally, inhibits secondary vitellogenesis in females. Has no hyperglycemic or molt-inhibiting activity. The protein is Vitellogenesis-inhibiting hormone of Armadillidium vulgare (Pillbug).